A 352-amino-acid chain; its full sequence is Spermidine/putrescine import ATP-binding protein PotA (352 aa).

Positions 7–237 constitute an ABC transporter domain; the sequence is IRLENVTKSF…PVNAFVADFI (231 aa). ATP is bound at residue 39–46; the sequence is GPSGCGKT.

This sequence belongs to the ABC transporter superfamily. Spermidine/putrescine importer (TC 3.A.1.11.1) family. In terms of assembly, the complex is composed of two ATP-binding proteins (PotA), two transmembrane proteins (PotB and PotC) and a solute-binding protein (PotD).

The protein localises to the cell membrane. It carries out the reaction ATP + H2O + polyamine-[polyamine-binding protein]Side 1 = ADP + phosphate + polyamineSide 2 + [polyamine-binding protein]Side 1.. Functionally, part of the ABC transporter complex PotABCD involved in spermidine/putrescine import. Responsible for energy coupling to the transport system. The polypeptide is Spermidine/putrescine import ATP-binding protein PotA (Acetivibrio thermocellus (strain ATCC 27405 / DSM 1237 / JCM 9322 / NBRC 103400 / NCIMB 10682 / NRRL B-4536 / VPI 7372) (Clostridium thermocellum)).